The chain runs to 1005 residues: Beta-galactosidase (1005 aa).

Residue E455 is the Proton donor of the active site. Residue E526 is the Nucleophile of the active site.

The protein belongs to the glycosyl hydrolase 2 family.

It catalyses the reaction Hydrolysis of terminal non-reducing beta-D-galactose residues in beta-D-galactosides.. The polypeptide is Beta-galactosidase (lacZ) (Actinobacillus pleuropneumoniae (Haemophilus pleuropneumoniae)).